We begin with the raw amino-acid sequence, 835 residues long: Protein translocase subunit SecA (835 aa).

Residues Gln85, 103 to 107 (GEGKT), and Asp492 each bind ATP. Residues Cys819, Cys821, Cys830, and Cys831 each contribute to the Zn(2+) site.

It belongs to the SecA family. Monomer and homodimer. Part of the essential Sec protein translocation apparatus which comprises SecA, SecYEG and auxiliary proteins SecDF. Other proteins may also be involved. Zn(2+) is required as a cofactor.

Its subcellular location is the cell membrane. The protein resides in the cytoplasm. It catalyses the reaction ATP + H2O + cellular proteinSide 1 = ADP + phosphate + cellular proteinSide 2.. In terms of biological role, part of the Sec protein translocase complex. Interacts with the SecYEG preprotein conducting channel. Has a central role in coupling the hydrolysis of ATP to the transfer of proteins into and across the cell membrane, serving as an ATP-driven molecular motor driving the stepwise translocation of polypeptide chains across the membrane. This is Protein translocase subunit SecA from Clostridium botulinum (strain Okra / Type B1).